Here is a 763-residue protein sequence, read N- to C-terminus: Phosphoglycerol transferase I (763 aa).

4 consecutive transmembrane segments (helical) span residues 1–21 (MSEL…AWKA), 26–46 (WWFA…ITLY), 77–97 (ILPG…LGWV), and 108–128 (VGYS…SPAF).

Belongs to the OpgB family.

It is found in the cell inner membrane. It catalyses the reaction a phosphatidylglycerol + a membrane-derived-oligosaccharide D-glucose = a 1,2-diacyl-sn-glycerol + a membrane-derived-oligosaccharide 6-(glycerophospho)-D-glucose.. It functions in the pathway glycan metabolism; osmoregulated periplasmic glucan (OPG) biosynthesis. In terms of biological role, transfers a phosphoglycerol residue from phosphatidylglycerol to the membrane-bound nascent glucan backbones. This Salmonella choleraesuis (strain SC-B67) protein is Phosphoglycerol transferase I.